Consider the following 198-residue polypeptide: Recombination protein RecR (198 aa).

The C4-type zinc finger occupies 57 to 72 (CSVCGHITENDPCYIC). Residues 80–175 (SVICVVEDDK…KVTRLAQGLS (96 aa)) form the Toprim domain.

The protein belongs to the RecR family.

May play a role in DNA repair. It seems to be involved in an RecBC-independent recombinational process of DNA repair. It may act with RecF and RecO. The polypeptide is Recombination protein RecR (Staphylococcus aureus (strain MSSA476)).